The sequence spans 325 residues: ADP-ribose glycohydrolase MACROD1 (325 aa).

N6-succinyllysine occurs at positions 96, 103, and 129. Residue lysine 138 forms a Glycyl lysine isopeptide (Lys-Gly) (interchain with G-Cter in SUMO2) linkage. Residues 141-322 enclose the Macro domain; the sequence is EPRYKKDKQL…IYRSRLPHYF (182 aa). 159 to 161 is a substrate binding site; the sequence is SDI. An N6-acetyllysine modification is found at lysine 163. Substrate-binding positions include 172 to 174, 179 to 184, 267 to 273, and phenylalanine 306; these read AAN, GGGGVD, and ISTGVFG.

It belongs to the MacroD-type family. MacroD1/2-like subfamily. In terms of assembly, interacts with ESR1; Interacts in a manner that is estrogen independent but is enhanced by estrogen. Interacts (via macro domain) with AR.

It is found in the nucleus. The enzyme catalyses 3''-O-acetyl-ADP-D-ribose + H2O = ADP-D-ribose + acetate + H(+). The catalysed reaction is 2''-O-acetyl-ADP-D-ribose + H2O = ADP-D-ribose + acetate + H(+). It catalyses the reaction 4-O-(ADP-D-ribosyl)-L-aspartyl-[protein] + H2O = L-aspartyl-[protein] + ADP-D-ribose + H(+). It carries out the reaction 5-O-(ADP-D-ribosyl)-L-glutamyl-[protein] + H2O = L-glutamyl-[protein] + ADP-D-ribose + H(+). The enzyme catalyses alpha-NAD(+) + H2O = ADP-D-ribose + nicotinamide + H(+). With respect to regulation, subject to competitive inhibition by the product ADP-ribose. Functionally, removes ADP-ribose from aspartate and glutamate residues in proteins bearing a single ADP-ribose moiety. Inactive towards proteins bearing poly-ADP-ribose. Deacetylates O-acetyl-ADP ribose, a signaling molecule generated by the deacetylation of acetylated lysine residues in histones and other proteins. Plays a role in estrogen signaling. Binds to androgen receptor (AR) and amplifies the transactivation function of AR in response to androgen. May play an important role in carcinogenesis and/or progression of hormone-dependent cancers by feed-forward mechanism that activates ESR1 transactivation. Could be an ESR1 coactivator, providing a positive feedback regulatory loop for ESR1 signal transduction. Could be involved in invasive growth by down-regulating CDH1 in endometrial cancer cells. Enhances ESR1-mediated transcription activity. The protein is ADP-ribose glycohydrolase MACROD1 of Homo sapiens (Human).